The chain runs to 189 residues: Elongation factor P (189 aa).

This sequence belongs to the elongation factor P family.

It localises to the cytoplasm. It functions in the pathway protein biosynthesis; polypeptide chain elongation. Functionally, involved in peptide bond synthesis. Stimulates efficient translation and peptide-bond synthesis on native or reconstituted 70S ribosomes in vitro. Probably functions indirectly by altering the affinity of the ribosome for aminoacyl-tRNA, thus increasing their reactivity as acceptors for peptidyl transferase. This Rhizobium etli (strain CIAT 652) protein is Elongation factor P.